A 1100-amino-acid chain; its full sequence is SLIT-ROBO Rho GTPase-activating protein 2 (1100 aa).

The 306-residue stretch at 19-324 (TQVKEIRAQL…AAENLEANSD (306 aa)) folds into the F-BAR domain. Coiled coils occupy residues 170–201 (YNMDSINAESKLKEAEKQEEKQMSRSVRHEEK) and 363–400 (GELIQRCQQLQSRLSTLNIENEEVKKTMEATLQTIQDM). A compositionally biased stretch (basic and acidic residues) spans 181-203 (LKEAEKQEEKQMSRSVRHEEKQT). The interval 181 to 210 (LKEAEKQEEKQMSRSVRHEEKQTPRSPDSL) is disordered. The Rho-GAP domain occupies 496-680 (VRKQEAIQII…TIIIHHESIF (185 aa)). Residues 738-797 (SDPIEAIARFDYSGRTNRELSFKKGASLLLYSRASDDWWEGRHNGTEGLVPHQYIVVQDM) enclose the SH3 domain. Disordered regions lie at residues 800–835 (GYAGRGSPKADLEGSHDSVEEKVSTRASASSPTGGH) and 852–938 (EATS…PLDP). A compositionally biased stretch (basic and acidic residues) spans 807-823 (PKADLEGSHDSVEEKVS). Residues 919–932 (RKSTPTGRSKSFSN) show a composition bias toward polar residues. Positions 945–972 (EHSSQDIEATMNTALSELRELERQSNVK) form a coiled coil. The tract at residues 986 to 1100 (KSGGTSEPSS…PPPTDKSCPV (115 aa)) is disordered. 2 stretches are compositionally biased toward polar residues: residues 987–997 (SGGTSEPSSPL) and 1008–1049 (SQHP…GSTF). Residues 1067–1081 (SSSAGGSPAMGSPTT) are compositionally biased toward low complexity. Residues 1082-1094 (TIPPTPPPPPPPT) are compositionally biased toward pro residues.

It localises to the cell membrane. It is found in the cell projection. The protein resides in the dendritic spine. Its subcellular location is the postsynaptic density. The protein localises to the postsynaptic cell membrane. It localises to the lamellipodium. It is found in the cytoplasmic vesicle. The protein resides in the phagosome. Its subcellular location is the nucleus. The protein localises to the cytoplasm. It localises to the cytosol. Postsynaptic RAC1 GTPase activating protein (GAP) that plays a key role in neuronal morphogenesis and migration mainly during development of the cerebral cortex. Regulates excitatory and inhibitory synapse maturation and density in cortical pyramidal neurons. Mechanistically, acts by binding and deforming membranes, thereby regulating actin dynamics to regulate cell migration and differentiation. The sequence is that of SLIT-ROBO Rho GTPase-activating protein 2 (srgap2) from Danio rerio (Zebrafish).